The sequence spans 131 residues: Glycine cleavage system H protein (131 aa).

In terms of domain architecture, Lipoyl-binding spans 24-106 (IATLGISAFA…HGEGWLLKVR (83 aa)). Residue lysine 65 is modified to N6-lipoyllysine.

It belongs to the GcvH family. The glycine cleavage system is composed of four proteins: P, T, L and H. It depends on (R)-lipoate as a cofactor.

Its function is as follows. The glycine cleavage system catalyzes the degradation of glycine. The H protein shuttles the methylamine group of glycine from the P protein to the T protein. The polypeptide is Glycine cleavage system H protein (Microcystis aeruginosa (strain NIES-843 / IAM M-2473)).